The primary structure comprises 119 residues: Methylglyoxal synthase (119 aa).

An MGS-like domain is found at 1 to 119 (MKIALIAHDK…KTAELIIKQF (119 aa)). Substrate is bound by residues histidine 8, lysine 12, 34 to 37 (TGTT), and 54 to 55 (SG). Aspartate 60 serves as the catalytic Proton donor/acceptor. Position 87 (histidine 87) interacts with substrate.

It belongs to the methylglyoxal synthase family.

The catalysed reaction is dihydroxyacetone phosphate = methylglyoxal + phosphate. Its function is as follows. Catalyzes the formation of methylglyoxal from dihydroxyacetone phosphate. This Clostridium beijerinckii (strain ATCC 51743 / NCIMB 8052) (Clostridium acetobutylicum) protein is Methylglyoxal synthase.